The sequence spans 403 residues: 26S proteasome regulatory subunit 8 homolog (403 aa).

Position 186–193 (186–193) interacts with ATP; that stretch reads GPPGTGKT.

It belongs to the AAA ATPase family.

It localises to the cytoplasm. Its subcellular location is the nucleus. Its function is as follows. The 26S proteasome is involved in the ATP-dependent degradation of ubiquitinated proteins. The regulatory (or ATPase) complex confers ATP dependency and substrate specificity to the 26S complex. The sequence is that of 26S proteasome regulatory subunit 8 homolog (let1) from Schizosaccharomyces pombe (strain 972 / ATCC 24843) (Fission yeast).